A 143-amino-acid chain; its full sequence is Transcriptional regulator MraZ (143 aa).

SpoVT-AbrB domains follow at residues 5 to 47 (EYRH…PQVE) and 76 to 119 (ATEC…SKEL).

The protein belongs to the MraZ family. In terms of assembly, forms oligomers.

It localises to the cytoplasm. Its subcellular location is the nucleoid. The sequence is that of Transcriptional regulator MraZ from Halalkalibacterium halodurans (strain ATCC BAA-125 / DSM 18197 / FERM 7344 / JCM 9153 / C-125) (Bacillus halodurans).